We begin with the raw amino-acid sequence, 482 residues long: GTPase Obg (482 aa).

An Obg domain is found at 2–159 (PRFVDRVVIH…VDLTLELKTV (158 aa)). Residues 160–340 (ADVGLVGFPS…LTFALWEMIV (181 aa)) form the OBG-type G domain. Residues 166 to 173 (GFPSAGKS), 191 to 195 (FTTLV), 212 to 215 (DVPG), 292 to 295 (NKVD), and 321 to 323 (STL) contribute to the GTP site. Mg(2+) contacts are provided by Ser-173 and Thr-193. The 81-residue stretch at 358–438 (PIPVDESGFT…IGDMTFDWEP (81 aa)) folds into the OCT domain. A disordered region spans residues 441–482 (PAGVDVTMSGRGTDARIDKTDRVGAAERRQARRVRRGQVEPE). Positions 453–469 (TDARIDKTDRVGAAERR) are enriched in basic and acidic residues.

This sequence belongs to the TRAFAC class OBG-HflX-like GTPase superfamily. OBG GTPase family. Monomer. Mg(2+) is required as a cofactor.

It is found in the cytoplasm. An essential GTPase which binds GTP, GDP and possibly (p)ppGpp with moderate affinity, with high nucleotide exchange rates and a fairly low GTP hydrolysis rate. Plays a role in control of the cell cycle, stress response, ribosome biogenesis and in those bacteria that undergo differentiation, in morphogenesis control. This chain is GTPase Obg, found in Mycobacteroides abscessus (strain ATCC 19977 / DSM 44196 / CCUG 20993 / CIP 104536 / JCM 13569 / NCTC 13031 / TMC 1543 / L948) (Mycobacterium abscessus).